The sequence spans 939 residues: Translation initiation factor IF-2 (939 aa).

A compositionally biased stretch (basic and acidic residues) spans 81-94 (EEQSRKAYEKEQQL). Disordered stretches follow at residues 81–303 (EEQS…KKVE) and 316–337 (TISGMDDSGSSGSRQKFRKMRR). Residues 99–108 (SSAPSPAPAA) are compositionally biased toward low complexity. Composition is skewed to basic and acidic residues over residues 112–127 (EPVKEPFVEIPARHEP) and 148–173 (SPKEEVVATKAPEAEAKPVEQPEKAA). Residues 178–189 (EAQPEAQSQQEP) show a composition bias toward low complexity. Residues 244 to 255 (FKENAAELKDEF) are compositionally biased toward basic and acidic residues. Residues 276-287 (AAGEGESTTGGE) show a composition bias toward low complexity. Residues 292–301 (KKKKGKKKKK) show a composition bias toward basic residues. Residues 318-328 (SGMDDSGSSGS) show a composition bias toward low complexity. A tr-type G domain is found at 436–606 (TRPPVVTIMG…LTEAEVRELK (171 aa)). The interval 445 to 452 (GHVDHGKT) is G1. 445–452 (GHVDHGKT) lines the GTP pocket. The G2 stretch occupies residues 470–474 (GITQH). Residues 492 to 495 (DTPG) are G3. GTP-binding positions include 492–496 (DTPGH) and 546–549 (NKID). A G4 region spans residues 546 to 549 (NKID). Residues 582–584 (SAK) are G5.

This sequence belongs to the TRAFAC class translation factor GTPase superfamily. Classic translation factor GTPase family. IF-2 subfamily.

Its subcellular location is the cytoplasm. Functionally, one of the essential components for the initiation of protein synthesis. Protects formylmethionyl-tRNA from spontaneous hydrolysis and promotes its binding to the 30S ribosomal subunits. Also involved in the hydrolysis of GTP during the formation of the 70S ribosomal complex. This chain is Translation initiation factor IF-2, found in Chlorobaculum parvum (strain DSM 263 / NCIMB 8327) (Chlorobium vibrioforme subsp. thiosulfatophilum).